The chain runs to 155 residues: Protein archease-like (155 aa).

Ca(2+) contacts are provided by aspartate 26, aspartate 154, and isoleucine 155.

This sequence belongs to the archease family.

Functionally, component of the tRNA-splicing ligase complex required to facilitate the enzymatic turnover of catalytic subunit RtcB. This Caenorhabditis briggsae protein is Protein archease-like.